Here is a 400-residue protein sequence, read N- to C-terminus: LIM homeobox transcription factor 1-beta.1 (400 aa).

2 LIM zinc-binding domains span residues 54 to 113 and 114 to 175; these read AVCE…LFAA and KCSG…EKDL. The tract at residues 175–228 is disordered; sequence LLSSGSPDDSDSVKSDDEEGDVKPGKGRVNQGKGSDDGKDPRRPKRPRTILTTQ. The segment at residues 218 to 277 is a DNA-binding region (homeobox); the sequence is PKRPRTILTTQQRRAFKASFEVSSKPCRKVRETLAAETGLSVRVVQVWFQNQRAKIKKLA.

In terms of tissue distribution, shows a temporal expression pattern in three main areas: neural, kidney and limbs. From stage 13 onwards, expressed in regions of the nervous system including the placodes and otic vesicles, eye, specific sets of neurons, and in discreet regions of the neural tube. From stage 13, also expressed in the presumptive pronephros, and from stage 27 expression is predominant in the capsule of the pronephric glomus. Also expressed in the developing forelimbs and hindlimbs. In metamorphosing tadpoles, expressed in the eye, brain, muscle and mesonephric kidney.

The protein localises to the nucleus. In terms of biological role, required for early specification of the kidney glomus, lying upstream of wt1 in the pathway controlling glomus differentiation. The balance in levels and expression patterns of binding partners such as lhx1/lim-1 influences differentiation into glomus or tubule derivatives. Involved in specification of serotonergic neurons. This Xenopus laevis (African clawed frog) protein is LIM homeobox transcription factor 1-beta.1.